The sequence spans 413 residues: PCI domain-containing protein 2 homolog (413 aa).

The region spanning 222 to 403 is the PCI domain; that stretch reads VAYNYFLGRK…QKLVISKMNA (182 aa).

The protein belongs to the CSN12 family.

The polypeptide is PCI domain-containing protein 2 homolog (Caenorhabditis elegans).